Here is a 200-residue protein sequence, read N- to C-terminus: Large ribosomal subunit protein uL4 (200 aa).

Residues 43-67 (RAQKTRAEVSGSGKKPWRQKGTGRA) form a disordered region.

The protein belongs to the universal ribosomal protein uL4 family. As to quaternary structure, part of the 50S ribosomal subunit.

In terms of biological role, one of the primary rRNA binding proteins, this protein initially binds near the 5'-end of the 23S rRNA. It is important during the early stages of 50S assembly. It makes multiple contacts with different domains of the 23S rRNA in the assembled 50S subunit and ribosome. Its function is as follows. Forms part of the polypeptide exit tunnel. The sequence is that of Large ribosomal subunit protein uL4 from Haemophilus influenzae (strain PittEE).